The following is a 390-amino-acid chain: Fluoride export protein 1 (390 aa).

Positions 1-22 (MVAPLVSESQSSSIEETDEQQQ) are disordered. Topologically, residues 1–72 (MVAPLVSESQ…RFLDKTQKYY (72 aa)) are cytoplasmic. Residues 73–93 (PVILNIVHGAIWGVLVRKGLM) traverse the membrane as a helical segment. At 94–100 (SLTTYSG) the chain is on the extracellular side. A helical membrane pass occupies residues 101–121 (SFLSGVIWANFAACVVMGLAI). The Cytoplasmic portion of the chain corresponds to 122-143 (DGEVFWIRLLEEKDYPNKGAIP). Residues 144–164 (VYTGLTTGFCGTVSSFSSVIL) form a helical membrane-spanning segment. At 165–185 (EAFNKAADTDIGVRHHYPNGA) the chain is on the extracellular side. A helical transmembrane segment spans residues 186–206 (YGIMQFLAVILAQFGLSIMGF). Over 207–229 (HMGKQFSAVVDNYLPLVTKRIYK) the chain is Cytoplasmic. A helical transmembrane segment spans residues 230 to 250 (VLELTSMILGVVLVVITCILI). At 251 to 256 (GVKKQG) the chain is on the extracellular side. A helical membrane pass occupies residues 257–279 (SWRSWTFSMLFAPFGALLRYYLS). Over 280-290 (KFLNNKVSNFP) the chain is Cytoplasmic. The chain crosses the membrane as a helical span at residues 291-311 (LGTFTANFLGTLLLAVFTLLA). At 312-338 (RGKLPGGKGHIVTNTIALHVLEGLDDG) the chain is on the extracellular side. Residues 339-359 (FCGGLTTVSTFVVELFGLKTL) form a helical membrane-spanning segment. Residues 360-368 (FSYRYGTIS) are Cytoplasmic-facing. A helical transmembrane segment spans residues 369–389 (ILVCFAGVVLILGSYNWSVGL). Residue Asp-390 is a topological domain, extracellular.

The protein belongs to the fluoride channel Fluc/FEX (TC 1.A.43) family.

The protein resides in the cell membrane. It catalyses the reaction fluoride(in) = fluoride(out). In terms of biological role, fluoride channel required for the rapid expulsion of cytoplasmic fluoride. This is Fluoride export protein 1 from Candida albicans (strain SC5314 / ATCC MYA-2876) (Yeast).